The chain runs to 389 residues: Flap endonuclease 1 (389 aa).

Residues 1-105 (MGIKGLTALM…GELAKRKDKR (105 aa)) are N-domain. Asp-34 contributes to the Mg(2+) binding site. Residue Arg-71 participates in DNA binding. Residues Asp-87, Glu-159, Glu-161, Asp-180, and Asp-182 each contribute to the Mg(2+) site. The tract at residues 123–254 (EVEKLSKRTV…KTALKLIKEH (132 aa)) is I-domain. Residue Glu-159 coordinates DNA. DNA is bound by residues Gly-232 and Asp-234. Asp-234 is a Mg(2+) binding site. Residues 338–346 (SQNRLESFF) form an interaction with PCNA region. A disordered region spans residues 356-389 (IGKRKVEEKKGKNGKAGLANKKSKGVSGFRRSKN).

Belongs to the XPG/RAD2 endonuclease family. FEN1 subfamily. Interacts with PCNA. Three molecules of FEN1 bind to one PCNA trimer with each molecule binding to one PCNA monomer. PCNA stimulates the nuclease activity without altering cleavage specificity. The cofactor is Mg(2+). In terms of processing, phosphorylated. Phosphorylation upon DNA damage induces relocalization to the nuclear plasma.

Its subcellular location is the nucleus. The protein resides in the nucleolus. The protein localises to the nucleoplasm. It localises to the mitochondrion. Functionally, structure-specific nuclease with 5'-flap endonuclease and 5'-3' exonuclease activities involved in DNA replication and repair. During DNA replication, cleaves the 5'-overhanging flap structure that is generated by displacement synthesis when DNA polymerase encounters the 5'-end of a downstream Okazaki fragment. It enters the flap from the 5'-end and then tracks to cleave the flap base, leaving a nick for ligation. Also involved in the long patch base excision repair (LP-BER) pathway, by cleaving within the apurinic/apyrimidinic (AP) site-terminated flap. Acts as a genome stabilization factor that prevents flaps from equilibrating into structures that lead to duplications and deletions. Also possesses 5'-3' exonuclease activity on nicked or gapped double-stranded DNA, and exhibits RNase H activity. Also involved in replication and repair of rDNA and in repairing mitochondrial DNA. The chain is Flap endonuclease 1 from Ostreococcus lucimarinus (strain CCE9901).